We begin with the raw amino-acid sequence, 217 residues long: Large ribosomal subunit protein uL3 (217 aa).

The interval 127–162 is disordered; that stretch reads GFSRGPMSHGSKNHRAPGSTGAGTTPGRIYPGKRMA. The segment covering 142–153 has biased composition (low complexity); sequence APGSTGAGTTPG.

The protein belongs to the universal ribosomal protein uL3 family. As to quaternary structure, part of the 50S ribosomal subunit. Forms a cluster with proteins L14 and L19.

Functionally, one of the primary rRNA binding proteins, it binds directly near the 3'-end of the 23S rRNA, where it nucleates assembly of the 50S subunit. In Prochlorococcus marinus (strain MIT 9312), this protein is Large ribosomal subunit protein uL3.